A 196-amino-acid polypeptide reads, in one-letter code: Peptidyl-tRNA hydrolase (196 aa).

Residue His15 participates in tRNA binding. His20 acts as the Proton acceptor in catalysis. Positions 66, 68, and 114 each coordinate tRNA.

It belongs to the PTH family. As to quaternary structure, monomer.

Its subcellular location is the cytoplasm. The enzyme catalyses an N-acyl-L-alpha-aminoacyl-tRNA + H2O = an N-acyl-L-amino acid + a tRNA + H(+). Its function is as follows. Hydrolyzes ribosome-free peptidyl-tRNAs (with 1 or more amino acids incorporated), which drop off the ribosome during protein synthesis, or as a result of ribosome stalling. Functionally, catalyzes the release of premature peptidyl moieties from peptidyl-tRNA molecules trapped in stalled 50S ribosomal subunits, and thus maintains levels of free tRNAs and 50S ribosomes. The polypeptide is Peptidyl-tRNA hydrolase (Polynucleobacter asymbioticus (strain DSM 18221 / CIP 109841 / QLW-P1DMWA-1) (Polynucleobacter necessarius subsp. asymbioticus)).